The chain runs to 373 residues: ATP phosphoribosyltransferase regulatory subunit (373 aa).

It belongs to the class-II aminoacyl-tRNA synthetase family. HisZ subfamily. In terms of assembly, heteromultimer composed of HisG and HisZ subunits.

Its subcellular location is the cytoplasm. It functions in the pathway amino-acid biosynthesis; L-histidine biosynthesis; L-histidine from 5-phospho-alpha-D-ribose 1-diphosphate: step 1/9. Functionally, required for the first step of histidine biosynthesis. May allow the feedback regulation of ATP phosphoribosyltransferase activity by histidine. The sequence is that of ATP phosphoribosyltransferase regulatory subunit from Rhizobium johnstonii (strain DSM 114642 / LMG 32736 / 3841) (Rhizobium leguminosarum bv. viciae).